The chain runs to 776 residues: Homoaconitase, mitochondrial (776 aa).

Residues 1–24 constitute a mitochondrion transit peptide; sequence MVALRRAVALNAVAIARLQTRALT. [4Fe-4S] cluster is bound by residues cysteine 392, cysteine 459, and cysteine 462.

This sequence belongs to the aconitase/IPM isomerase family. It depends on [4Fe-4S] cluster as a cofactor.

It is found in the mitochondrion. The enzyme catalyses (2R,3S)-homoisocitrate = cis-homoaconitate + H2O. Its pathway is amino-acid biosynthesis; L-lysine biosynthesis via AAA pathway; L-alpha-aminoadipate from 2-oxoglutarate: step 3/5. Catalyzes the reversible hydration of cis-homoaconitate to (2R,3S)-homoisocitrate, a step in the alpha-aminoadipate pathway for lysine biosynthesis. This Gibberella zeae (strain ATCC MYA-4620 / CBS 123657 / FGSC 9075 / NRRL 31084 / PH-1) (Wheat head blight fungus) protein is Homoaconitase, mitochondrial (LYS4).